Reading from the N-terminus, the 305-residue chain is Acyl transferase (305 aa).

Catalysis depends on charge relay system residues serine 114, aspartate 211, and histidine 241.

The protein belongs to the LuxD family.

The protein operates within lipid metabolism; fatty acid reduction for biolumincescence. Acyl transferase is part of the fatty acid reductase system required for aldehyde biosynthesis; it produces fatty acids for the luminescent reaction. The chain is Acyl transferase from Vibrio campbellii (strain ATCC BAA-1116).